Reading from the N-terminus, the 127-residue chain is Protein HI_1253 (127 aa).

The next 4 membrane-spanning stretches (helical) occupy residues 13 to 33 (VIML…LLVI), 61 to 81 (LIVS…WWLV), 82 to 102 (AKFA…SKKV), and 107 to 127 (SIFF…AYLK).

Belongs to the SirB2 family.

Its subcellular location is the cell inner membrane. The sequence is that of Protein HI_1253 from Haemophilus influenzae (strain ATCC 51907 / DSM 11121 / KW20 / Rd).